Consider the following 59-residue polypeptide: Small ribosomal subunit protein bS21 (59 aa).

Residues 40-59 (KPSVKRKKKSEAARKRKSFR) form a disordered region. Positions 43–59 (VKRKKKSEAARKRKSFR) are enriched in basic residues.

It belongs to the bacterial ribosomal protein bS21 family.

The protein is Small ribosomal subunit protein bS21 of Desulforamulus reducens (strain ATCC BAA-1160 / DSM 100696 / MI-1) (Desulfotomaculum reducens).